A 355-amino-acid polypeptide reads, in one-letter code: MKIAVLPGDGIGPEIVAEAVKVLNALDEKFEMETAPVGGAGYEAEGHPLPENTLKLAKEADAILFGAVGDWKYDSLERALRPEQAILGLRKHLQLFANFRPAICYPELTGASSLKPELVAGLDILIVRELNGDIYFGQPRGVREAPDGLFKGAREGFDTMRYSEPEIRRIAHVAFQAAAKRGKKLCSVDKANVLETFQFWKDIVIDVSKEYPDVELSHMYVDNAAMQLVKAPKSFDVIVTGNMFGDILSDEAAMLTGSIGMLPSASLDANNKGLYEPSHGSAPDIAGKGVANPLATILSAAMMLRYSLNKAEQADRIENAVKKVLAQGYRTGDILTPGCKQVGTREMGEAVLAAL.

Residues R90, R100, R128, and D222 each contribute to the substrate site. Residues D222, D246, and D250 each coordinate Mg(2+). Residue 280 to 292 (GSAPDIAGKGVAN) coordinates NAD(+).

This sequence belongs to the isocitrate and isopropylmalate dehydrogenases family. LeuB type 1 subfamily. In terms of assembly, homodimer. Requires Mg(2+) as cofactor. Mn(2+) serves as cofactor.

The protein resides in the cytoplasm. It carries out the reaction (2R,3S)-3-isopropylmalate + NAD(+) = 4-methyl-2-oxopentanoate + CO2 + NADH. Its pathway is amino-acid biosynthesis; L-leucine biosynthesis; L-leucine from 3-methyl-2-oxobutanoate: step 3/4. Catalyzes the oxidation of 3-carboxy-2-hydroxy-4-methylpentanoate (3-isopropylmalate) to 3-carboxy-4-methyl-2-oxopentanoate. The product decarboxylates to 4-methyl-2 oxopentanoate. The chain is 3-isopropylmalate dehydrogenase from Cupriavidus pinatubonensis (strain JMP 134 / LMG 1197) (Cupriavidus necator (strain JMP 134)).